Reading from the N-terminus, the 388-residue chain is Chorismate synthase (388 aa).

NADP(+)-binding residues include Arg-39 and Arg-45. FMN is bound by residues 130 to 132, 251 to 252, Gly-296, 311 to 315, and Arg-337; these read RSS, NA, and KPIPT.

Belongs to the chorismate synthase family. As to quaternary structure, homotetramer. Requires FMNH2 as cofactor.

The catalysed reaction is 5-O-(1-carboxyvinyl)-3-phosphoshikimate = chorismate + phosphate. The protein operates within metabolic intermediate biosynthesis; chorismate biosynthesis; chorismate from D-erythrose 4-phosphate and phosphoenolpyruvate: step 7/7. Functionally, catalyzes the anti-1,4-elimination of the C-3 phosphate and the C-6 proR hydrogen from 5-enolpyruvylshikimate-3-phosphate (EPSP) to yield chorismate, which is the branch point compound that serves as the starting substrate for the three terminal pathways of aromatic amino acid biosynthesis. This reaction introduces a second double bond into the aromatic ring system. The protein is Chorismate synthase of Streptococcus agalactiae serotype III (strain NEM316).